The primary structure comprises 196 residues: CASP-like protein 2U1 (196 aa).

Residues 1–11 (MAPMECVRRRN) are Cytoplasmic-facing. Residues 12 to 32 (VGELVLRCAATLVCMLSLMLL) traverse the membrane as a helical segment. The Extracellular portion of the chain corresponds to 33-58 (VRDQQIAVQEVGVTSVTTQLRYSSST). Residues 59-79 (GLVYLVYANGLVALYCFVVVL) traverse the membrane as a helical segment. The Cytoplasmic portion of the chain corresponds to 80–95 (TSSFNGGSVMRRNKSG). A helical transmembrane segment spans residues 96 to 116 (AWALFVLDQVLACILLSAASA). The Extracellular portion of the chain corresponds to 117–148 (ASEIAFLVEKGAKKTIWDSKCIVYGHFCRMLE). The helical transmembrane segment at 149–169 (VSIATSFIAVIMLGSICVLSA) threads the bilayer. Topologically, residues 170 to 196 (KQLFQQYTHYARIVNMVKLKSTPNSLL) are cytoplasmic.

This sequence belongs to the Casparian strip membrane proteins (CASP) family. Homodimer and heterodimers.

It localises to the cell membrane. This chain is CASP-like protein 2U1, found in Pteridium aquilinum subsp. aquilinum (Bracken fern).